The sequence spans 264 residues: Glutamate racemase (264 aa).

Residues 10–11 (DS) and 42–43 (YG) contribute to the substrate site. C73 (proton donor/acceptor) is an active-site residue. A substrate-binding site is contributed by 74 to 75 (NT). The active-site Proton donor/acceptor is C183. Residue 184–185 (TH) coordinates substrate.

The protein belongs to the aspartate/glutamate racemases family.

The enzyme catalyses L-glutamate = D-glutamate. It functions in the pathway cell wall biogenesis; peptidoglycan biosynthesis. In terms of biological role, provides the (R)-glutamate required for cell wall biosynthesis. In Streptococcus pyogenes serotype M2 (strain MGAS10270), this protein is Glutamate racemase.